Consider the following 178-residue polypeptide: Large ribosomal subunit protein uL13m (178 aa).

It belongs to the universal ribosomal protein uL13 family. In terms of assembly, component of the mitochondrial ribosome large subunit (39S) which comprises a 16S rRNA and about 50 distinct proteins. Interacts with OXA1L.

It is found in the mitochondrion. This is Large ribosomal subunit protein uL13m (MRPL13) from Bos taurus (Bovine).